The chain runs to 550 residues: Chaperonin GroEL (550 aa).

ATP is bound by residues T30 to P33, K51, D87 to T91, G415, and D496. Positions P526 to Y550 are disordered. Residues G537 to Y550 are compositionally biased toward gly residues.

It belongs to the chaperonin (HSP60) family. As to quaternary structure, forms a cylinder of 14 subunits composed of two heptameric rings stacked back-to-back. Interacts with the co-chaperonin GroES.

It is found in the cytoplasm. It carries out the reaction ATP + H2O + a folded polypeptide = ADP + phosphate + an unfolded polypeptide.. Together with its co-chaperonin GroES, plays an essential role in assisting protein folding. The GroEL-GroES system forms a nano-cage that allows encapsulation of the non-native substrate proteins and provides a physical environment optimized to promote and accelerate protein folding. The chain is Chaperonin GroEL from Chloroherpeton thalassium (strain ATCC 35110 / GB-78).